Reading from the N-terminus, the 276-residue chain is Pantothenate synthetase (276 aa).

Position 27 to 34 (27 to 34) interacts with ATP; that stretch reads MGALHRGH. The Proton donor role is filled by H34. Q58 is a (R)-pantoate binding site. Q58 is a binding site for beta-alanine. Residue 147–150 coordinates ATP; that stretch reads GKKD. A (R)-pantoate-binding site is contributed by Q153. ATP is bound by residues A176 and 184 to 187; that span reads LSSR.

It belongs to the pantothenate synthetase family. In terms of assembly, homodimer.

It is found in the cytoplasm. It carries out the reaction (R)-pantoate + beta-alanine + ATP = (R)-pantothenate + AMP + diphosphate + H(+). The protein operates within cofactor biosynthesis; (R)-pantothenate biosynthesis; (R)-pantothenate from (R)-pantoate and beta-alanine: step 1/1. Functionally, catalyzes the condensation of pantoate with beta-alanine in an ATP-dependent reaction via a pantoyl-adenylate intermediate. This chain is Pantothenate synthetase, found in Helicobacter pylori (strain P12).